Here is a 515-residue protein sequence, read N- to C-terminus: SWI/SNF-related matrix-associated actin-dependent regulator of chromatin subfamily D member 1 (515 aa).

Residues 1–128 are disordered; it reads MAARAGFQSV…RNHNAKKKKM (128 aa). A compositionally biased stretch (gly residues) spans 14-23; that stretch reads GGAGASGGAG. An interaction with ESR1, NR1H4, NR3C1, PGR and SMARCA4 region spans residues 43-167; sequence APGQGLYRSP…DQTIMRKRLD (125 aa). Arginine 68 and arginine 88 each carry asymmetric dimethylarginine. Lysine 101 is covalently cross-linked (Glycyl lysine isopeptide (Lys-Gly) (interchain with G-Cter in SUMO2)). Residues 104 to 117 are compositionally biased toward low complexity; the sequence is APQQIQQVQQQAVQ. Residues 168 to 474 form an interaction with SMARCC1 and SMARCC2 region; sequence IQEALKRPIK…TMTDVVGNPE (307 aa). Positions 180-515 are necessary for GR/NR3C1-mediated remodeling and transcription from chromatin; required for GR/NR3C1 interaction with the BRG1/SMARCA4 complex in vivo; the sequence is RKLRIFISNT…LEQALGIRNT (336 aa). At threonine 203 the chain carries Phosphothreonine. Lysine 223 is modified (N6-acetyllysine). The SWIB/MDM2 domain maps to 290-367; that stretch reads YQPPQFKLDP…PQRLHALLMP (78 aa). Residues 412 to 440 adopt a coiled-coil conformation; sequence ASQQEIATLDNKIHETIETINQLKTQREF.

It belongs to the SMARCD family. As to quaternary structure, component of the multiprotein chromatin-remodeling complexes SWI/SNF: SWI/SNF-A (BAF), SWI/SNF-B (PBAF) and related complexes. The canonical complex contains a catalytic subunit (either SMARCA4/BRG1/BAF190A or SMARCA2/BRM/BAF190B), and at least SMARCE1, ACTL6A/BAF53, SMARCC1/BAF155, SMARCC2/BAF170, and SMARCB1/SNF5/BAF47. Other subunits specific to each of the complexes may also be present permitting several possible combinations developmentally and tissue specific. Component of the BAF complex, which includes at least actin (ACTB), ARID1A/BAF250A, ARID1B/BAF250B, SMARCA2/BRM, SMARCA4/BRG1/BAF190A, ACTL6A/BAF53, ACTL6B/BAF53B, SMARCE1/BAF57, SMARCC1/BAF155, SMARCC2/BAF170, SMARCB1/SNF5/INI1, and one or more SMARCD1/BAF60A, SMARCD2/BAF60B, or SMARCD3/BAF60C. In muscle cells, the BAF complex also contains DPF3. Component of neural progenitors-specific chromatin remodeling complex (npBAF complex) composed of at least, ARID1A/BAF250A or ARID1B/BAF250B, SMARCD1/BAF60A, SMARCD3/BAF60C, SMARCA2/BRM/BAF190B, SMARCA4/BRG1/BAF190A, SMARCB1/BAF47, SMARCC1/BAF155, SMARCE1/BAF57, SMARCC2/BAF170, PHF10/BAF45A, ACTL6A/BAF53A and actin. Component of neuron-specific chromatin remodeling complex (nBAF complex) composed of at least, ARID1A/BAF250A or ARID1B/BAF250B, SMARCD1/BAF60A, SMARCD3/BAF60C, SMARCA2/BRM/BAF190B, SMARCA4/BRG1/BAF190A, SMARCB1/BAF47, SMARCC1/BAF155, SMARCE1/BAF57, SMARCC2/BAF170, DPF1/BAF45B, DPF3/BAF45C, ACTL6B/BAF53B and actin. Component of the SWI/SNF-B (PBAF) chromatin remodeling complex, at least composed of SMARCA4/BRG1, SMARCB1/BAF47/SNF5, ACTL6A/BAF53A or ACTL6B/BAF53B, SMARCE1/BAF57, SMARCD1/BAF60A, SMARCD2/BAF60B, perhaps SMARCD3/BAF60C, SMARCC1/BAF155, SMARCC2/BAF170, PBRM1/BAF180, ARID2/BAF200 and actin (ACTB). Component of SWI/SNF (GBAF) subcomplex, which includes at least BICRA or BICRAL (mutually exclusive), BRD9, SS18, SMARCA2/BRM, SMARCA4/BRG1/BAF190A, ACTL6A/BAF53, SMARCC1/BAF155, and SMARCD1/BAF60A. Specifically interacts with the VDR heterodimer complex. Interacts with ESR1, NR3C1, NR1H4, PGR, SMARCA4, SMARCC1 and SMARCC2. Interacts with DPF2. Interacts with DPF3a (isoform 2 of DPF3/BAF45C) and with HDGFL2 in a DPF3a-dependent manner. Interacts with FOS, FOSB isoform 1 and 2, FOSL1 and FOSL2. Interacts with AKIRIN2. As to expression, ubiquitous.

Its subcellular location is the nucleus. Involved in transcriptional activation and repression of select genes by chromatin remodeling (alteration of DNA-nucleosome topology). Component of SWI/SNF chromatin remodeling complexes that carry out key enzymatic activities, changing chromatin structure by altering DNA-histone contacts within a nucleosome in an ATP-dependent manner. Belongs to the neural progenitors-specific chromatin remodeling complex (npBAF complex) and the neuron-specific chromatin remodeling complex (nBAF complex). During neural development a switch from a stem/progenitor to a postmitotic chromatin remodeling mechanism occurs as neurons exit the cell cycle and become committed to their adult state. The transition from proliferating neural stem/progenitor cells to postmitotic neurons requires a switch in subunit composition of the npBAF and nBAF complexes. As neural progenitors exit mitosis and differentiate into neurons, npBAF complexes which contain ACTL6A/BAF53A and PHF10/BAF45A, are exchanged for homologous alternative ACTL6B/BAF53B and DPF1/BAF45B or DPF3/BAF45C subunits in neuron-specific complexes (nBAF). The npBAF complex is essential for the self-renewal/proliferative capacity of the multipotent neural stem cells. The nBAF complex along with CREST plays a role regulating the activity of genes essential for dendrite growth. Has a strong influence on vitamin D-mediated transcriptional activity from an enhancer vitamin D receptor element (VDRE). May be a link between mammalian SWI-SNF-like chromatin remodeling complexes and the vitamin D receptor (VDR) heterodimer. Mediates critical interactions between nuclear receptors and the BRG1/SMARCA4 chromatin-remodeling complex for transactivation. This Mus musculus (Mouse) protein is SWI/SNF-related matrix-associated actin-dependent regulator of chromatin subfamily D member 1 (Smarcd1).